Reading from the N-terminus, the 367-residue chain is Pantothenate kinase CAB1 (367 aa).

The protein belongs to the type II pantothenate kinase family.

Its subcellular location is the cytoplasm. The protein localises to the nucleus. The catalysed reaction is (R)-pantothenate + ATP = (R)-4'-phosphopantothenate + ADP + H(+). The protein operates within cofactor biosynthesis; coenzyme A biosynthesis; CoA from (R)-pantothenate: step 1/5. Its activity is regulated as follows. Regulated by feedback inhibition by malonyl-CoA. Its function is as follows. Plays a role in the physiological regulation of the intracellular CoA concentration. This Saccharomyces cerevisiae (strain ATCC 204508 / S288c) (Baker's yeast) protein is Pantothenate kinase CAB1 (CAB1).